Here is a 234-residue protein sequence, read N- to C-terminus: Putative lipoyltransferase 2, mitochondrial (234 aa).

The N-terminal 28 residues, 1–28 (MPFVRPLVTVVRAGRHSYSAGLQLQQRL), are a transit peptide targeting the mitochondrion. In terms of domain architecture, BPL/LPL catalytic spans 39–220 (AEFRNYLVLQ…SFAKVFECRL (182 aa)). Residues 83–90 (RGGLITFH), 150–152 (AIG), and 163–165 (GIG) contribute to the substrate site. Cysteine 181 serves as the catalytic Acyl-thioester intermediate.

The protein belongs to the LipB family.

Its subcellular location is the mitochondrion. It carries out the reaction octanoyl-[ACP] + L-lysyl-[protein] = N(6)-octanoyl-L-lysyl-[protein] + holo-[ACP] + H(+). It participates in protein modification; protein lipoylation via endogenous pathway; protein N(6)-(lipoyl)lysine from octanoyl-[acyl-carrier-protein]: step 1/2. Its function is as follows. Catalyzes the transfer of endogenously produced octanoic acid from octanoyl-acyl-carrier-protein onto the lipoyl domains of lipoate-dependent enzymes. Lipoyl-ACP can also act as a substrate although octanoyl-ACP is likely to be the physiological substrate. This chain is Putative lipoyltransferase 2, mitochondrial, found in Drosophila melanogaster (Fruit fly).